The sequence spans 215 residues: MSKAIVLDSHLKEKGSVELPKRYEGINSHNLYLYVKHYLSSARANTAKSKNRAEVSGGGRKPWAQKGGGRARAGSITSPVFVGGGVSHGATNKRNYNLKINKKQKRLALEYALEEKAQANKLFVVEKIAIKGVVEDNKRKHLTKEANQMFQALEQRDTLFVCLNMDEYTELAFSNLKKCLVIDVSELNAYLLAAFSSVVMEEAAFQHVVQDKTEE.

The segment at 46 to 72 (TAKSKNRAEVSGGGRKPWAQKGGGRAR) is disordered. The segment covering 56–71 (SGGGRKPWAQKGGGRA) has biased composition (gly residues).

It belongs to the universal ribosomal protein uL4 family. In terms of assembly, part of the 50S ribosomal subunit.

One of the primary rRNA binding proteins, this protein initially binds near the 5'-end of the 23S rRNA. It is important during the early stages of 50S assembly. It makes multiple contacts with different domains of the 23S rRNA in the assembled 50S subunit and ribosome. Functionally, forms part of the polypeptide exit tunnel. In Helicobacter pylori (strain J99 / ATCC 700824) (Campylobacter pylori J99), this protein is Large ribosomal subunit protein uL4.